The chain runs to 173 residues: MGTPCHFALFELQPNFRLDLEQLATRYRELARGVHPDRFADASEREQRLALEKSASLNEAYQTLKNPPKRARYLLAMNGGEVPIEVTVHDPDFLMQQMQWREELEDLQDEADVAGVAVFKRRLKTAQDELNESFAACWNDAAQREQAERLMRRMQFLDKLTYEVRQLEERLDD.

The 73-residue stretch at 5-77 (CHFALFELQP…PKRARYLLAM (73 aa)) folds into the J domain.

Belongs to the HscB family. Interacts with HscA and stimulates its ATPase activity.

Functionally, co-chaperone involved in the maturation of iron-sulfur cluster-containing proteins. Seems to help targeting proteins to be folded toward HscA. This chain is Co-chaperone protein HscB homolog, found in Pseudomonas fluorescens (strain SBW25).